The following is a 375-amino-acid chain: Glutamate 5-kinase (375 aa).

Lysine 17 contributes to the ATP binding site. 3 residues coordinate substrate: serine 57, aspartate 144, and asparagine 158. An ATP-binding site is contributed by 178-179; sequence TD. Residues 284–360 enclose the PUA domain; that stretch reads SGSIVVDTGA…NEIADILGYK (77 aa).

Belongs to the glutamate 5-kinase family.

It localises to the cytoplasm. It carries out the reaction L-glutamate + ATP = L-glutamyl 5-phosphate + ADP. Its pathway is amino-acid biosynthesis; L-proline biosynthesis; L-glutamate 5-semialdehyde from L-glutamate: step 1/2. Its function is as follows. Catalyzes the transfer of a phosphate group to glutamate to form L-glutamate 5-phosphate. The polypeptide is Glutamate 5-kinase (Methanococcoides burtonii (strain DSM 6242 / NBRC 107633 / OCM 468 / ACE-M)).